We begin with the raw amino-acid sequence, 670 residues long: Probable leucine-rich repeat receptor-like protein kinase At1g68400 (670 aa).

A signal peptide spans 1–29 (MAKSSFFNKHLLLSLLILLQSCLLSSSSS). Over 30–274 (TDSETLLNFK…KSNNTSRIST (245 aa)) the chain is Extracellular. N-linked (GlcNAc...) asparagine glycans are attached at residues Asn52, Asn79, Asn102, Asn109, and Asn112. LRR repeat units follow at residues 69–91 (RVTR…TSLT), 92–114 (SLRV…SNLT), 115–137 (ALKL…ITSL), 139–162 (RLYR…TDLT), 163–185 (HLLT…NLSD), and 186–207 (LQDF…LSQF). N-linked (GlcNAc...) asparagine glycosylation is found at Asn149, Asn182, and Asn190. Residues 230–266 (SSDPTKPGRPDEAKASPLNKPETVPSSPTSIHGGDKS) form a disordered region. The span at 253-266 (VPSSPTSIHGGDKS) shows a compositional bias: polar residues. N-linked (GlcNAc...) asparagine glycosylation is present at Asn268. The helical transmembrane segment at 275-295 (ISLIAIILGDFIILSFVSLLL) threads the bilayer. Residues 296–670 (YYCFWRQYAV…EDTCGGTTSQ (375 aa)) lie on the Cytoplasmic side of the membrane. The region spanning 362–636 (RASAEMLGKG…GHVVKLIEDI (275 aa)) is the Protein kinase domain. Ser364 bears the Phosphoserine mark. ATP-binding positions include 368–376 (LGKGGFGTA) and Lys390. Residue Ser443 is modified to Phosphoserine. Phosphothreonine is present on Thr463. Catalysis depends on Asp491, which acts as the Proton acceptor. Position 616 is a phosphothreonine (Thr616).

This sequence belongs to the protein kinase superfamily. Ser/Thr protein kinase family.

The protein resides in the cell membrane. It carries out the reaction L-seryl-[protein] + ATP = O-phospho-L-seryl-[protein] + ADP + H(+). It catalyses the reaction L-threonyl-[protein] + ATP = O-phospho-L-threonyl-[protein] + ADP + H(+). The sequence is that of Probable leucine-rich repeat receptor-like protein kinase At1g68400 from Arabidopsis thaliana (Mouse-ear cress).